The chain runs to 191 residues: MIGTLSGIIEEVQDTSIILAVGGVGYIVHVSYRTLINCKRGDSIKLYIETYVNRDNVPQLYGFTDTEEQNCLKMLIKVSGINYRTALAILDRLTPDQLFSAIVNEDKAALKVGGVGAKLINRIFTELTPLVQKLEFNIMDKRGPSVEDSDALSALLSLGYEKTRVLNALEKVGVSHNLSDTVRFALKELSK.

Positions Met-1–Thr-64 are domain I. The interval Asp-65–Ser-145 is domain II. The interval Val-146–Ser-149 is flexible linker. The tract at residues Ser-149 to Lys-191 is domain III.

The protein belongs to the RuvA family. Homotetramer. Forms an RuvA(8)-RuvB(12)-Holliday junction (HJ) complex. HJ DNA is sandwiched between 2 RuvA tetramers; dsDNA enters through RuvA and exits via RuvB. An RuvB hexamer assembles on each DNA strand where it exits the tetramer. Each RuvB hexamer is contacted by two RuvA subunits (via domain III) on 2 adjacent RuvB subunits; this complex drives branch migration. In the full resolvosome a probable DNA-RuvA(4)-RuvB(12)-RuvC(2) complex forms which resolves the HJ.

The protein resides in the cytoplasm. Functionally, the RuvA-RuvB-RuvC complex processes Holliday junction (HJ) DNA during genetic recombination and DNA repair, while the RuvA-RuvB complex plays an important role in the rescue of blocked DNA replication forks via replication fork reversal (RFR). RuvA specifically binds to HJ cruciform DNA, conferring on it an open structure. The RuvB hexamer acts as an ATP-dependent pump, pulling dsDNA into and through the RuvAB complex. HJ branch migration allows RuvC to scan DNA until it finds its consensus sequence, where it cleaves and resolves the cruciform DNA. The sequence is that of Holliday junction branch migration complex subunit RuvA from Anaplasma phagocytophilum (strain HZ).